The chain runs to 300 residues: Tetrahydromethanopterin S-methyltransferase subunit E (300 aa).

6 helical membrane passes run 62–82, 86–106, 135–155, 158–178, 226–246, and 261–281; these read PVSY…LMGM, PILA…AYSV, PIVG…YLAV, LGNP…VGAI, YFCS…IIFL, and LITK…TTLL.

The protein belongs to the MtrE family. As to quaternary structure, the complex is composed of 8 subunits; MtrA, MtrB, MtrC, MtrD, MtrE, MtrF, MtrG and MtrH.

Its subcellular location is the cell membrane. The enzyme catalyses 5-methyl-5,6,7,8-tetrahydromethanopterin + coenzyme M + 2 Na(+)(in) = 5,6,7,8-tetrahydromethanopterin + methyl-coenzyme M + 2 Na(+)(out). Its pathway is one-carbon metabolism; methanogenesis from CO(2); methyl-coenzyme M from 5,10-methylene-5,6,7,8-tetrahydromethanopterin: step 2/2. Functionally, part of a complex that catalyzes the formation of methyl-coenzyme M and tetrahydromethanopterin from coenzyme M and methyl-tetrahydromethanopterin. This is an energy-conserving, sodium-ion translocating step. This is Tetrahydromethanopterin S-methyltransferase subunit E from Methanococcus aeolicus (strain ATCC BAA-1280 / DSM 17508 / OCM 812 / Nankai-3).